The sequence spans 238 residues: ATP synthase subunit a (238 aa).

Transmembrane regions (helical) follow at residues 18-38 (LTIL…VFWA), 75-95 (YSLL…LGLM), 112-132 (NFGV…IEGI), 179-199 (VVTG…PLAF), and 203-223 (IVWT…FIIL).

The protein belongs to the ATPase A chain family. As to quaternary structure, F-type ATPases have 2 components, CF(1) - the catalytic core - and CF(0) - the membrane proton channel. CF(1) has five subunits: alpha(3), beta(3), gamma(1), delta(1), epsilon(1). CF(0) has three main subunits: a(1), b(2) and c(9-12). The alpha and beta chains form an alternating ring which encloses part of the gamma chain. CF(1) is attached to CF(0) by a central stalk formed by the gamma and epsilon chains, while a peripheral stalk is formed by the delta and b chains.

The protein localises to the cell membrane. Key component of the proton channel; it plays a direct role in the translocation of protons across the membrane. This is ATP synthase subunit a from Streptococcus agalactiae serotype III (strain NEM316).